A 448-amino-acid chain; its full sequence is Protein TraN (448 aa).

Disordered stretches follow at residues 243–273 (NRVG…NSGE) and 411–448 (EAAR…NKPS). Over residues 246–261 (GASRTATTARAGQQQS) the composition is skewed to low complexity. Polar residues predominate over residues 262-271 (PAVKQSSGNS). The segment covering 421-437 (RKQEQEKKQAQERERGR) has biased composition (basic and acidic residues). A compositionally biased stretch (polar residues) spans 438–448 (SQSLGLSNKPS).

The protein to H.influenzae HI_1407.

The sequence is that of Protein TraN (traN) from Escherichia coli.